The primary structure comprises 156 residues: Small ribosomal subunit protein uS7 (156 aa).

This sequence belongs to the universal ribosomal protein uS7 family. As to quaternary structure, part of the 30S ribosomal subunit. Contacts proteins S9 and S11.

Its function is as follows. One of the primary rRNA binding proteins, it binds directly to 16S rRNA where it nucleates assembly of the head domain of the 30S subunit. Is located at the subunit interface close to the decoding center, probably blocks exit of the E-site tRNA. This is Small ribosomal subunit protein uS7 from Brucella anthropi (strain ATCC 49188 / DSM 6882 / CCUG 24695 / JCM 21032 / LMG 3331 / NBRC 15819 / NCTC 12168 / Alc 37) (Ochrobactrum anthropi).